A 207-amino-acid polypeptide reads, in one-letter code: FMN-dependent NADH:quinone oxidoreductase 3 (207 aa).

FMN-binding positions include Ser-10 and 16–18 (SIS).

It belongs to the azoreductase type 1 family. In terms of assembly, homodimer. The cofactor is FMN.

It catalyses the reaction 2 a quinone + NADH + H(+) = 2 a 1,4-benzosemiquinone + NAD(+). It carries out the reaction N,N-dimethyl-1,4-phenylenediamine + anthranilate + 2 NAD(+) = 2-(4-dimethylaminophenyl)diazenylbenzoate + 2 NADH + 2 H(+). Quinone reductase that provides resistance to thiol-specific stress caused by electrophilic quinones. In terms of biological role, also exhibits azoreductase activity. Catalyzes the reductive cleavage of the azo bond in aromatic azo compounds to the corresponding amines. The chain is FMN-dependent NADH:quinone oxidoreductase 3 from Burkholderia lata (strain ATCC 17760 / DSM 23089 / LMG 22485 / NCIMB 9086 / R18194 / 383).